Here is a 387-residue protein sequence, read N- to C-terminus: Limonene 1,2-monooxygenase (387 aa).

Belongs to the bacterial luciferase oxidoreductase family. FAD is required as a cofactor.

It carries out the reaction (4S)-limonene + NADPH + O2 + H(+) = limonene 1,2-epoxide + NADP(+) + H2O. It catalyses the reaction (4S)-limonene + NADH + O2 + H(+) = limonene 1,2-epoxide + NAD(+) + H2O. The enzyme catalyses (4R)-limonene + NADH + O2 + H(+) = limonene 1,2-epoxide + NAD(+) + H2O. The catalysed reaction is (4R)-limonene + NADPH + O2 + H(+) = limonene 1,2-epoxide + NADP(+) + H2O. The protein operates within terpene metabolism; (4R)-limonene degradation; (1S,4R)-1-hydroxylimonen-2-one from (4R)-limonene: step 1/3. In terms of biological role, acts on both enantiomers of limonene by their NAD-dependent epoxidation at the 1,2 double bond forming limonene-1,2-epoxide. The sequence is that of Limonene 1,2-monooxygenase (limB) from Rhodococcus erythropolis (Arthrobacter picolinophilus).